A 521-amino-acid polypeptide reads, in one-letter code: Solute carrier family 35 member F4 (521 aa).

10 consecutive transmembrane segments (helical) span residues 160-180 (MVLKGIWGLLIILSVSSSWVG), 192-212 (FYCPFFMTWFSTNWNIMFFPV), 248-266 (FLKRTAPFSILWTLTNYLY), 277-297 (DVSALFCCNKAFVFLLSWIVL), 301-321 (FMGVRIVAAIMAITGIVMMAY), 330-350 (IIGVAFAVGSASTSALYKVLF), 365-385 (FVSTLGFFNLIFISFTPVILY), 395-417 (FAALPWGCLCGMAGLWLAFNILV), 419-441 (VGVVLTYPILISIGTVLSVPGNA), and 450-470 (VIFNVVRLAATIIICIGFLLM). One can recognise an EamA domain in the interval 261 to 321 (LTNYLYLLAL…AITGIVMMAY (61 aa)).

The protein belongs to the SLC35F solute transporter family.

The protein resides in the membrane. Its function is as follows. Putative solute transporter. The protein is Solute carrier family 35 member F4 (SLC35F4) of Homo sapiens (Human).